Here is a 205-residue protein sequence, read N- to C-terminus: Holliday junction branch migration complex subunit RuvA (205 aa).

Residues 1–64 form a domain I region; it reads MIGKLKGVVD…EDQIRLFGFS (64 aa). Positions 65 to 143 are domain II; that stretch reads SAAERDWFRL…GFSASEPLAA (79 aa). The segment at 144–152 is flexible linker; the sequence is QLGGGGVAS. Positions 153–205 are domain III; sequence AQGGAAADAVSALVNLGYGVPQANAAIAAALRGAGEGAKTEVLIRLGLKELAK.

Belongs to the RuvA family. Homotetramer. Forms an RuvA(8)-RuvB(12)-Holliday junction (HJ) complex. HJ DNA is sandwiched between 2 RuvA tetramers; dsDNA enters through RuvA and exits via RuvB. An RuvB hexamer assembles on each DNA strand where it exits the tetramer. Each RuvB hexamer is contacted by two RuvA subunits (via domain III) on 2 adjacent RuvB subunits; this complex drives branch migration. In the full resolvosome a probable DNA-RuvA(4)-RuvB(12)-RuvC(2) complex forms which resolves the HJ.

It localises to the cytoplasm. Functionally, the RuvA-RuvB-RuvC complex processes Holliday junction (HJ) DNA during genetic recombination and DNA repair, while the RuvA-RuvB complex plays an important role in the rescue of blocked DNA replication forks via replication fork reversal (RFR). RuvA specifically binds to HJ cruciform DNA, conferring on it an open structure. The RuvB hexamer acts as an ATP-dependent pump, pulling dsDNA into and through the RuvAB complex. HJ branch migration allows RuvC to scan DNA until it finds its consensus sequence, where it cleaves and resolves the cruciform DNA. The polypeptide is Holliday junction branch migration complex subunit RuvA (Xanthobacter autotrophicus (strain ATCC BAA-1158 / Py2)).